The following is a 73-amino-acid chain: Small ribosomal subunit protein bS18 (73 aa).

Belongs to the bacterial ribosomal protein bS18 family. As to quaternary structure, part of the 30S ribosomal subunit. Forms a tight heterodimer with protein bS6.

Its function is as follows. Binds as a heterodimer with protein bS6 to the central domain of the 16S rRNA, where it helps stabilize the platform of the 30S subunit. The protein is Small ribosomal subunit protein bS18 of Prochlorococcus marinus subsp. pastoris (strain CCMP1986 / NIES-2087 / MED4).